Here is a 127-residue protein sequence, read N- to C-terminus: Glycine cleavage system H protein (127 aa).

In terms of domain architecture, Lipoyl-binding spans 24 to 105; it reads TAVVGITDFA…YNEGWIVKMK (82 aa). At K65 the chain carries N6-lipoyllysine.

It belongs to the GcvH family. In terms of assembly, the glycine cleavage system is composed of four proteins: P, T, L and H. It depends on (R)-lipoate as a cofactor.

Functionally, the glycine cleavage system catalyzes the degradation of glycine. The H protein shuttles the methylamine group of glycine from the P protein to the T protein. This chain is Glycine cleavage system H protein, found in Chlorobaculum parvum (strain DSM 263 / NCIMB 8327) (Chlorobium vibrioforme subsp. thiosulfatophilum).